A 338-amino-acid polypeptide reads, in one-letter code: MHIAALHQPSQVQLNQDGNLKHFLTIEGLSKENLTKILDTAQSFLDDNNNLINRPLLEGRTVMNLFFENSTRTRTTFEAAAKRLSANVLNIDIARSSTSKGETLRDTLWNLEAMAADIFVVRHSSSGAAHFIAKDVCPKVAIINAGDGRHAHPTQAMLDMLTIRREMKKPFEDLSVAIIGDIKHSRVARSDVAALQTLGCKDIRVIAPNTLLPVGFSEYGDHVRLFNNMDEGITGCDVIIALRIQNERIDSPALSSQSEFYRMYGLNKERLSLAKPDCIVMHPGPMNRGVEIDSSIADGEQSVILKQVTNGIAVRMAVLALSMQGQLQEQGLIDAIAL.

Arg-72 and Thr-73 together coordinate carbamoyl phosphate. Residue Lys-100 coordinates L-aspartate. Residues Arg-122, His-152, and Gln-155 each coordinate carbamoyl phosphate. L-aspartate contacts are provided by Arg-186 and Arg-243. The carbamoyl phosphate site is built by Gly-284 and Pro-285.

Belongs to the aspartate/ornithine carbamoyltransferase superfamily. ATCase family. Heterododecamer (2C3:3R2) of six catalytic PyrB chains organized as two trimers (C3), and six regulatory PyrI chains organized as three dimers (R2).

The enzyme catalyses carbamoyl phosphate + L-aspartate = N-carbamoyl-L-aspartate + phosphate + H(+). It participates in pyrimidine metabolism; UMP biosynthesis via de novo pathway; (S)-dihydroorotate from bicarbonate: step 2/3. In terms of biological role, catalyzes the condensation of carbamoyl phosphate and aspartate to form carbamoyl aspartate and inorganic phosphate, the committed step in the de novo pyrimidine nucleotide biosynthesis pathway. The sequence is that of Aspartate carbamoyltransferase catalytic subunit from Acinetobacter baumannii (strain SDF).